The sequence spans 174 residues: Type II secretion system protein M (174 aa).

Topologically, residues 1 to 32 (MKVMTQFHERLRAQAETSQLAIRWRGLPARDR) are cytoplasmic. A helical membrane pass occupies residues 33–52 (LALLWLGAFLLLVVLYLALW). Residues 53–174 (RPAERHLQSA…VSARLSLRVE (122 aa)) are Periplasmic-facing.

It belongs to the GSP M family. Type II secretion system is composed of four main components: the outer membrane complex, the inner membrane complex, the cytoplasmic secretion ATPase and the periplasm-spanning pseudopilus. Forms homodimers. Interacts with XcpY/GspL. Interacts with XcpR/GspE and XcpS/GspF.

The protein resides in the cell inner membrane. Functionally, inner membrane component of the type II secretion system required for the energy-dependent secretion of extracellular factors such as proteases and toxins from the periplasm. Plays a role in the complex assembly and recruits XcpY resulting in a stable complex in the inner membrane. Provides thus a link between the energy-providing XcpR protein in the cytoplasm and the rest of the T2SS machinery. In Pseudomonas aeruginosa (strain ATCC 15692 / DSM 22644 / CIP 104116 / JCM 14847 / LMG 12228 / 1C / PRS 101 / PAO1), this protein is Type II secretion system protein M (xcpZ).